The chain runs to 681 residues: Potassium-transporting ATPase ATP-binding subunit 1 (681 aa).

A run of 4 helical transmembrane segments spans residues 30-50, 59-79, 216-236, and 255-275; these read LLVY…FFGI, LAIA…EAIA, ILLV…LPFT, and IALL…SIGI. The active-site 4-aspartylphosphate intermediate is the Asp-306. ATP is bound by residues Asp-343, Glu-347, 376–383, and Lys-394; that span reads FTATTRMS. Mg(2+) contacts are provided by Asp-517 and Asp-521. Transmembrane regions (helical) follow at residues 587 to 607, 615 to 635, and 661 to 681; these read FAII…LNLM, AILS…PLSL, and LIAP…LGIV.

The protein belongs to the cation transport ATPase (P-type) (TC 3.A.3) family. Type IA subfamily. In terms of assembly, the system is composed of three essential subunits: KdpA, KdpB and KdpC.

It localises to the cell membrane. It catalyses the reaction K(+)(out) + ATP + H2O = K(+)(in) + ADP + phosphate + H(+). Its function is as follows. Part of the high-affinity ATP-driven potassium transport (or Kdp) system, which catalyzes the hydrolysis of ATP coupled with the electrogenic transport of potassium into the cytoplasm. This subunit is responsible for energy coupling to the transport system and for the release of the potassium ions to the cytoplasm. The chain is Potassium-transporting ATPase ATP-binding subunit 1 from Listeria innocua serovar 6a (strain ATCC BAA-680 / CLIP 11262).